Consider the following 320-residue polypeptide: Lipoyl synthase (320 aa).

Residues C67, C72, C78, C93, C97, C100, and S307 each contribute to the [4Fe-4S] cluster site. In terms of domain architecture, Radical SAM core spans 79-296 (FNHGTATFMI…RDKANEMGFE (218 aa)).

The protein belongs to the radical SAM superfamily. Lipoyl synthase family. Requires [4Fe-4S] cluster as cofactor.

Its subcellular location is the cytoplasm. The catalysed reaction is [[Fe-S] cluster scaffold protein carrying a second [4Fe-4S](2+) cluster] + N(6)-octanoyl-L-lysyl-[protein] + 2 oxidized [2Fe-2S]-[ferredoxin] + 2 S-adenosyl-L-methionine + 4 H(+) = [[Fe-S] cluster scaffold protein] + N(6)-[(R)-dihydrolipoyl]-L-lysyl-[protein] + 4 Fe(3+) + 2 hydrogen sulfide + 2 5'-deoxyadenosine + 2 L-methionine + 2 reduced [2Fe-2S]-[ferredoxin]. It functions in the pathway protein modification; protein lipoylation via endogenous pathway; protein N(6)-(lipoyl)lysine from octanoyl-[acyl-carrier-protein]: step 2/2. Catalyzes the radical-mediated insertion of two sulfur atoms into the C-6 and C-8 positions of the octanoyl moiety bound to the lipoyl domains of lipoate-dependent enzymes, thereby converting the octanoylated domains into lipoylated derivatives. The protein is Lipoyl synthase of Haemophilus influenzae (strain PittEE).